Reading from the N-terminus, the 1321-residue chain is C-Jun-amino-terminal kinase-interacting protein 4 (1321 aa).

Met-1 is modified (N-acetylmethionine). Residues 7 to 95 (VVYQEEPGGS…ITQYEREKAL (89 aa)) enclose the RH1 domain. Positions 66 to 166 (AQDQEHQVEL…NALHQRHTEM (101 aa)) form a coiled coil. A phosphoserine mark is found at Ser-109, Ser-183, Ser-185, Ser-194, and Ser-203. The segment at 203–308 (SLGIFPLPAG…EGFVKGTDTS (106 aa)) is disordered. The residue at position 217 (Thr-217) is a Phosphothreonine. Polar residues predominate over residues 236–248 (ELSQPRSHTSLKV). 5 positions are modified to phosphoserine: Ser-238, Ser-251, Ser-265, Ser-268, and Ser-272. A compositionally biased stretch (polar residues) spans 266–285 (DISQGGSKATTPASTANSDV). Thr-292 bears the Phosphothreonine mark. 4 positions are modified to phosphoserine: Ser-311, Ser-329, Ser-332, and Ser-347. Residues 322–332 (AQETRNVSTES) are compositionally biased toward polar residues. The disordered stretch occupies residues 322-341 (AQETRNVSTESGENEEKSEV). Phosphothreonine occurs at positions 348, 365, and 418. Positions 408 to 534 (REVENLILEN…LQEAVRWTEM (127 aa)) form a coiled coil. Positions 473 to 489 (LRKARAEAEDARQKAKD) are enriched in basic and acidic residues. 2 disordered regions span residues 473 to 500 (LRKA…TAQR) and 563 to 600 (SSNA…SQLP). One can recognise an RH2 domain in the interval 500–604 (RKRFTRVEMA…TLSQLPGDKS (105 aa)). Thr-586 is modified (phosphothreonine). Ser-588 carries the phosphoserine modification. Thr-595 carries the phosphothreonine modification. A phosphoserine mark is found at Ser-705, Ser-728, Ser-730, Ser-732, and Ser-733. Residues 724–758 (SKQRSASQSSLDKLDQELKEQQKEFKNQEELSSQV) adopt a coiled-coil conformation. The disordered stretch occupies residues 853–883 (TGAATSPSTNGASPVIEKPPEMETENSEVDE). The span at 855–864 (AATSPSTNGA) shows a compositional bias: polar residues. Residues 874 to 883 (METENSEVDE) are compositionally biased toward acidic residues. Ser-1188 bears the Phosphoserine mark. Positions 1239–1267 (PQSSSGGADLTADKAGSSAQEPSSQTPLK) are disordered. Positions 1255 to 1266 (SSAQEPSSQTPL) are enriched in polar residues. Residue Thr-1264 is modified to Phosphothreonine.

It belongs to the JIP scaffold family. In terms of assembly, homodimer. The homodimer interacts with ARF6, forming a heterotetramer. Homooligomer. Interacts with MAX, MAPK8, MAPK14, MAP3K3, MYC, and MAP2K4. Interacts with KNS2. Interaction with KNS2 is important in the formation of ternary complex with MAPK8. Interacts with PIP4P1. Interacts with PIKFYVE. In terms of processing, phosphorylated by MAPK8 and MAPK14. As to expression, highly expressed in brain, kidney, liver, heart.

It localises to the cytoplasm. The protein resides in the perinuclear region. It is found in the lysosome membrane. The JNK-interacting protein (JIP) group of scaffold proteins selectively mediates JNK signaling by aggregating specific components of the MAPK cascade to form a functional JNK signaling module. Regulates lysosomal positioning by acting as an adapter protein which links PIP4P1-positive lysosomes to the dynein-dynactin complex. Assists PIKFYVE selective functionality in microtubule-based endosome-to-TGN trafficking. The sequence is that of C-Jun-amino-terminal kinase-interacting protein 4 from Mus musculus (Mouse).